A 258-amino-acid polypeptide reads, in one-letter code: MRSSHKSFDFENSLKRIDSILNDSTSYEESDDIPDIDDLTFNNGKYVNCAAIFIDLRGSTDLIKTLGKLSKSLARLYRAYISEMVAIVNSFKTCKEINIVGDCVSAMFAGDIEGAESPVIEALQASSMANAMMNVLNVKYKKKWKDFVELKAGIGVAYGRALVIKAGFSGSGIKDLVYMGDVVNKASKMCGLAYKEYTSHAICVTKEVYENAGKYIANEEKKLTYQDFLTEKNHNTFGSVYVGNFHRVYINNWAEENK.

Positions 50–190 (AAIFIDLRGS…DVVNKASKMC (141 aa)) constitute a Guanylate cyclase domain. Phenylalanine 53 contacts a ribonucleoside 5'-triphosphate. Mn(2+)-binding residues include aspartate 55 and aspartate 102.

This sequence belongs to the adenylyl cyclase class-4/guanylyl cyclase family. Pyrimidine cyclase subfamily. In terms of assembly, homodimer. The cofactor is Mn(2+).

It localises to the cytoplasm. It carries out the reaction UTP = 3',5'-cyclic UMP + diphosphate. Its function is as follows. Pycsar (pyrimidine cyclase system for antiphage resistance) provides immunity against bacteriophage. The pyrimidine cyclase (PycC) synthesizes cyclic nucleotides in response to infection; these serve as specific second messenger signals. The signals activate the adjacent effector, leading to bacterial cell death and abortive phage infection. A clade C Pycsar system. In terms of biological role, the pyrimidine cyclase gene of a two-gene Pycsar system, weakly generates cyclic UMP (cUMP) from UTP, has little to no activity on ATP, CTP or GTP. Expression of this and adjacent effector GmPycTM (AC P0DV43) probably confers resistance to bacteriophage. The genes are probably only expressed in response to bacteriophage infection. The protein is Uridylate cyclase of Gulbenkiania mobilis.